Here is a 482-residue protein sequence, read N- to C-terminus: MAATVAVENLNPKVLKCEYAVRGEIVIHAQHLQQQLQTQPGSLPFDEILYCNIGNPQSLGQQPVTFFREVLALCDHPCLLEKEETKSLFSADAISRAKQILSTIPGRATGAYSHSQGIKGLRDAIAAGIASRDGFPANADDIFVTDGASPGVHMMMQLLIRNEKDGILCPIPQYPLYSASIALHGGTLVPYYLDEKTGWGLEISDLKKQLEDARSKGIDVRALVVINPGNPTGQVLAEDNQCDIVRFCKNEGLVLLADEVYQENIYVDDKKFNSFKKIARSVGYGEDDLPLVSFQSVSKGYYGECGKRGGYMEITGFSAPVREQIYKIASVNLCSNITGQILASLVMNPPKVGDESYAAYKAEKDGILQSLARRAKALEDAFNNLEGISCNKAEGAMYLFPQIHLPKKAIEAAKAANKAPDAFYALRLLESTGIVVVPGSGFGQVPGTWHIRCTILPQEDKIPAVITRFKAFHEAFMAEYRD.

Lys299 bears the N6-(pyridoxal phosphate)lysine mark.

It belongs to the class-I pyridoxal-phosphate-dependent aminotransferase family. Alanine aminotransferase subfamily. As to quaternary structure, homodimer. Requires pyridoxal 5'-phosphate as cofactor. The N-terminus is blocked. In terms of tissue distribution, mesophyll and bundle sheath cells.

The enzyme catalyses L-alanine + 2-oxoglutarate = pyruvate + L-glutamate. It functions in the pathway photosynthesis; C4 acid pathway. It participates in amino-acid degradation; L-alanine degradation via transaminase pathway; pyruvate from L-alanine: step 1/1. In terms of biological role, transfer of C3 units between the cytosol of mesophyll and bundle sheath cells to maintain a nitrogen-carbon balance in the C4-dicarboxylic pathway. This chain is Alanine aminotransferase 2, found in Panicum miliaceum (Proso millet).